Consider the following 249-residue polypeptide: Probable transcriptional regulatory protein LBJ_0543 (249 aa).

This sequence belongs to the TACO1 family.

It is found in the cytoplasm. This is Probable transcriptional regulatory protein LBJ_0543 from Leptospira borgpetersenii serovar Hardjo-bovis (strain JB197).